The following is a 357-amino-acid chain: UDP-N-acetylglucosamine--N-acetylmuramyl-(pentapeptide) pyrophosphoryl-undecaprenol N-acetylglucosamine transferase (357 aa).

Residues Thr13–Gly15, Asn125, Arg161, Ser189, Ile243, and Gln288 contribute to the UDP-N-acetyl-alpha-D-glucosamine site.

This sequence belongs to the glycosyltransferase 28 family. MurG subfamily.

It localises to the cell inner membrane. It carries out the reaction di-trans,octa-cis-undecaprenyl diphospho-N-acetyl-alpha-D-muramoyl-L-alanyl-D-glutamyl-meso-2,6-diaminopimeloyl-D-alanyl-D-alanine + UDP-N-acetyl-alpha-D-glucosamine = di-trans,octa-cis-undecaprenyl diphospho-[N-acetyl-alpha-D-glucosaminyl-(1-&gt;4)]-N-acetyl-alpha-D-muramoyl-L-alanyl-D-glutamyl-meso-2,6-diaminopimeloyl-D-alanyl-D-alanine + UDP + H(+). The protein operates within cell wall biogenesis; peptidoglycan biosynthesis. Cell wall formation. Catalyzes the transfer of a GlcNAc subunit on undecaprenyl-pyrophosphoryl-MurNAc-pentapeptide (lipid intermediate I) to form undecaprenyl-pyrophosphoryl-MurNAc-(pentapeptide)GlcNAc (lipid intermediate II). In Polynucleobacter asymbioticus (strain DSM 18221 / CIP 109841 / QLW-P1DMWA-1) (Polynucleobacter necessarius subsp. asymbioticus), this protein is UDP-N-acetylglucosamine--N-acetylmuramyl-(pentapeptide) pyrophosphoryl-undecaprenol N-acetylglucosamine transferase.